We begin with the raw amino-acid sequence, 475 residues long: Ankyrin repeat, SAM and basic leucine zipper domain-containing protein 1 (475 aa).

Positions 1–25 (MAAGTLRGLAVAGGGESSDSEDDGW) are disordered. A phosphoserine mark is found at S17, S18, and S20. 6 ANK repeats span residues 45-74 (EKNE…NVDS), 78-107 (YGWT…NASF), 110-144 (DKLT…DPNT), 148-177 (RLMT…EVNA), 181-210 (NGYT…NKML), and 214-243 (DGRT…PLEG). In terms of domain architecture, SAM spans 272–334 (PYTAFGDLEI…KILAALKELE (63 aa)).

In terms of assembly, interacts with DDX4, PIWIL1, RANBP9 and TDRD1. Expressed exclusively in testis and ovary with higher levels in testis.

It is found in the cytoplasm. In terms of biological role, plays a central role during spermatogenesis by repressing transposable elements and preventing their mobilization, which is essential for the germline integrity. Acts via the piRNA metabolic process, which mediates the repression of transposable elements during meiosis by forming complexes composed of piRNAs and Piwi proteins and governs the methylation and subsequent repression of transposons. Its association with pi-bodies suggests a participation in the primary piRNAs metabolic process. Required prior to the pachytene stage to facilitate the production of multiple types of piRNAs, including those associated with repeats involved in regulation of retrotransposons. May act by mediating protein-protein interactions during germ cell maturation. The polypeptide is Ankyrin repeat, SAM and basic leucine zipper domain-containing protein 1 (Mus musculus (Mouse)).